Reading from the N-terminus, the 507-residue chain is Maturase K (507 aa).

It belongs to the intron maturase 2 family. MatK subfamily.

The protein resides in the plastid. It localises to the chloroplast. Functionally, usually encoded in the trnK tRNA gene intron. Probably assists in splicing its own and other chloroplast group II introns. The protein is Maturase K of Nymphaea alba (White water-lily).